The primary structure comprises 237 residues: RNA-binding protein 38 (237 aa).

The interval 1-24 (MLLQPACSPSVFPRPSAAPSAMHG) is disordered. The 78-residue stretch at 32-109 (TKIFVGGLPY…RKANVNLAYL (78 aa)) folds into the RRM domain.

Belongs to the RBM38 family. Expressed in cardiac and skeletal muscle tissues.

It is found in the cytoplasm. The protein localises to the cytosol. The protein resides in the nucleus. Functionally, RNA-binding protein that specifically bind the 3'-UTR of CDKN1A transcripts, leading to maintain the stability of CDKN1A transcripts, thereby acting as a mediator of the p53/TP53 family to regulate CDKN1A. CDKN1A is a cyclin-dependent kinase inhibitor transcriptionally regulated by the p53/TP53 family to induce cell cycle arrest. Has the ability to induce cell cycle arrest in G1 and maintain the stability of CDKN1A transcripts induced by p53/TP53. Also acts as a mRNA splicing factor. Specifically regulates the expression of FGFR2-IIIb, an epithelial cell-specific isoform of FGFR2. Plays a role in myogenic differentiation. This Mus musculus (Mouse) protein is RNA-binding protein 38 (Rbm38).